The primary structure comprises 450 residues: Tubulin alpha-2 chain (450 aa).

Gln-11 contributes to the GTP binding site. At Lys-40 the chain carries N6-acetyllysine. Positions 71, 144, 145, 179, 206, and 228 each coordinate GTP. Glu-71 provides a ligand contact to Mg(2+). The active site involves Glu-254.

The protein belongs to the tubulin family. As to quaternary structure, dimer of alpha and beta chains. A typical microtubule is a hollow water-filled tube with an outer diameter of 25 nm and an inner diameter of 15 nM. Alpha-beta heterodimers associate head-to-tail to form protofilaments running lengthwise along the microtubule wall with the beta-tubulin subunit facing the microtubule plus end conferring a structural polarity. Microtubules usually have 13 protofilaments but different protofilament numbers can be found in some organisms and specialized cells. Requires Mg(2+) as cofactor. In terms of processing, undergoes a tyrosination/detyrosination cycle, the cyclic removal and re-addition of a C-terminal tyrosine residue by the enzymes tubulin tyrosine carboxypeptidase (TTCP) and tubulin tyrosine ligase (TTL), respectively. Acetylation of alpha chains at Lys-40 stabilizes microtubules and affects affinity and processivity of microtubule motors. This modification has a role in multiple cellular functions, ranging from cell motility, cell cycle progression or cell differentiation to intracellular trafficking and signaling.

It localises to the cytoplasm. It is found in the cytoskeleton. It catalyses the reaction GTP + H2O = GDP + phosphate + H(+). Functionally, tubulin is the major constituent of microtubules, a cylinder consisting of laterally associated linear protofilaments composed of alpha- and beta-tubulin heterodimers. Microtubules grow by the addition of GTP-tubulin dimers to the microtubule end, where a stabilizing cap forms. Below the cap, tubulin dimers are in GDP-bound state, owing to GTPase activity of alpha-tubulin. This chain is Tubulin alpha-2 chain, found in Gossypium hirsutum (Upland cotton).